A 185-amino-acid polypeptide reads, in one-letter code: Protein GrpE (185 aa).

Belongs to the GrpE family. As to quaternary structure, homodimer.

It is found in the cytoplasm. In terms of biological role, participates actively in the response to hyperosmotic and heat shock by preventing the aggregation of stress-denatured proteins, in association with DnaK and GrpE. It is the nucleotide exchange factor for DnaK and may function as a thermosensor. Unfolded proteins bind initially to DnaJ; upon interaction with the DnaJ-bound protein, DnaK hydrolyzes its bound ATP, resulting in the formation of a stable complex. GrpE releases ADP from DnaK; ATP binding to DnaK triggers the release of the substrate protein, thus completing the reaction cycle. Several rounds of ATP-dependent interactions between DnaJ, DnaK and GrpE are required for fully efficient folding. This is Protein GrpE from Methanobrevibacter smithii (strain ATCC 35061 / DSM 861 / OCM 144 / PS).